The primary structure comprises 314 residues: Mitochondrial 2-oxoglutarate/malate carrier protein (314 aa).

The residue at position 2 (A2) is an N-acetylalanine. The residue at position 6 (S6) is a Phosphoserine. Solcar repeat units lie at residues 23–108 (VKFL…LFER), 117–208 (PGFL…SKQF), and 217–306 (DNIL…MNKA). The helical transmembrane segment at 24–42 (KFLFGGLAGMGATVFVQPL) threads the bilayer. Residue K57 is modified to N6-succinyllysine. K73 bears the N6-acetyllysine mark. A helical transmembrane segment spans residues 83–101 (GLSAGLLRQATYTTTRLGI). Residue Y102 is modified to Phosphotyrosine. Transmembrane regions (helical) follow at residues 119 to 140 (FLLK…GPPA), 183 to 202 (GCIP…LASY), and 222 to 240 (HFCA…SMPV). K256 carries the N6-acetyllysine modification. A helical transmembrane segment spans residues 281 to 300 (GFTPYYARLGPHTVLTFIFL).

It belongs to the mitochondrial carrier (TC 2.A.29) family. As to quaternary structure, interacts with SMIM26. As to expression, expressed in liver, heart and brain.

Its subcellular location is the mitochondrion inner membrane. It carries out the reaction (S)-malate(in) + 2-oxoglutarate(out) = (S)-malate(out) + 2-oxoglutarate(in). The catalysed reaction is malonate(in) + 2-oxoglutarate(out) = malonate(out) + 2-oxoglutarate(in). The enzyme catalyses succinate(in) + 2-oxoglutarate(out) = succinate(out) + 2-oxoglutarate(in). It catalyses the reaction maleate(in) + 2-oxoglutarate(out) = maleate(out) + 2-oxoglutarate(in). It carries out the reaction oxaloacetate(in) + 2-oxoglutarate(out) = oxaloacetate(out) + 2-oxoglutarate(in). Catalyzes the transport of 2-oxoglutarate (alpha-oxoglutarate) across the inner mitochondrial membrane in an electroneutral exchange for malate. Can also exchange 2-oxoglutarate for other dicarboxylic acids such as malonate, succinate, maleate and oxaloacetate, although with lower affinity. Contributes to several metabolic processes, including the malate-aspartate shuttle, the oxoglutarate/isocitrate shuttle, in gluconeogenesis from lactate, and in nitrogen metabolism. Maintains mitochondrial fusion and fission events, and the organization and morphology of cristae. Involved in the regulation of apoptosis. Helps protect from cytotoxic-induced apoptosis by modulating glutathione levels in mitochondria. In Rattus norvegicus (Rat), this protein is Mitochondrial 2-oxoglutarate/malate carrier protein (Slc25a11).